We begin with the raw amino-acid sequence, 725 residues long: Beta-adducin (725 aa).

Residues 1–22 (MSEDTVPEAASPPPSQGQHYFD) form a disordered region. Residues Ser11 and Ser25 each carry the phosphoserine modification. Thr55 carries the phosphothreonine modification. Phosphoserine occurs at positions 60 and 344. The interval 425 to 444 (KQQKEKTRWLNTPNTYLRVN) is interaction with calmodulin. Residues 525-725 (AEKSRSPSTE…KSKKKEKVES (201 aa)) are disordered. Ser530 and Ser532 each carry phosphoserine. Thr533 carries the phosphothreonine modification. Phosphoserine is present on Ser535. Phosphothreonine is present on Thr561. Residues 566–588 (EEYKKEVERKKLEQEQEGEKDAA) show a composition bias toward basic and acidic residues. A phosphoserine mark is found at Ser594, Ser598, Ser602, and Ser606. Positions 596–621 (VKSTPASPVQSPTRAGTKSPAVSPSK) are enriched in polar residues. Thr612 is subject to Phosphothreonine. Residues Ser614, Ser618, and Ser620 each carry the phosphoserine modification. Basic and acidic residues-rich tracts occupy residues 622–631 (ASEDAKKTEV) and 639–654 (EPEK…KEEE). A Phosphothreonine modification is found at Thr674. Phosphoserine occurs at positions 678, 685, 688, 692, 696, 698, 700, 702, and 712. Residues 687 to 700 (TSGPLSPEGSPSKS) are compositionally biased toward low complexity. Basic residues predominate over residues 701 to 725 (PSKKKKKFRTPSFLKKSKKKEKVES). The interaction with calmodulin stretch occupies residues 703 to 720 (KKKKKFRTPSFLKKSKKK).

It belongs to the aldolase class II family. Adducin subfamily. Heterodimer of an alpha and a beta subunit. Found in a complex with ADD2, DMTN and SLC2A1. Interacts with SLC2A1. Found in liver, kidney, spleen, heart and brain.

Its subcellular location is the cytoplasm. It is found in the cytoskeleton. It localises to the cell membrane. Membrane-cytoskeleton-associated protein that promotes the assembly of the spectrin-actin network. Binds to the erythrocyte membrane receptor SLC2A1/GLUT1 and may therefore provide a link between the spectrin cytoskeleton to the plasma membrane. Binds to calmodulin. Calmodulin binds preferentially to the beta subunit. This Rattus norvegicus (Rat) protein is Beta-adducin (Add2).